A 75-amino-acid chain; its full sequence is Small ribosomal subunit protein bS18 (75 aa).

Belongs to the bacterial ribosomal protein bS18 family. As to quaternary structure, part of the 30S ribosomal subunit. Forms a tight heterodimer with protein bS6.

Binds as a heterodimer with protein bS6 to the central domain of the 16S rRNA, where it helps stabilize the platform of the 30S subunit. This Acinetobacter baumannii (strain AB307-0294) protein is Small ribosomal subunit protein bS18.